We begin with the raw amino-acid sequence, 834 residues long: MSGWRKIYYKLLNLPLKLLVKSKVIPADPVSELGLDPSRPILYVLPYNSKADLLTLRAQCLAQDLPDPLIPLEIDGVQLPSHVFIENGPRVFRYYVPKQESVKLFHDYLDLHRNNPALDIQMLPVSVMFGRSPGREGHGTPHLRVLNGVQKFFAVLWLGRDSFVRFSTTVSLRRMASEHGTDKTIAHKLARVARMHFSRQRLAAVGPSLPARQDLFKKLLASKAIEKAVADEARSKKISHEKAQQNAITLMEEIAANFSYEAVRLSDRVLSWTWNRLYQGINVHNAERVRQLAQDGHEIVYVPCHRSHMDYLLLSYVLYHQGLVPPHIAAGINLNFWPAGPIFRRLGAFFIRRTFKGNKLYSTVFREYLGELFTRGYSVEYFVEGGRSRTGRLLEPKTGTLSMTIQAMLRGGTRPITLVPIYIGYEHVMEVGTYAKELRGAIKEKENLLQMLRGLRKLRNLGQGYVNFGEPLPLTTYLNTHVPQWRDAIDPIEAQRPSWLTPAVNDLANQIMVRINNAAAANAMNLCSTALLASRQRSLTREQLLEQLDCYLQLMRNAPYAKDTTVPDKTPEELLNHALNMNKFEVEKDTIGDIIILPREQAVLMTYYRNNIQHLLILPSLIASMVMYHRRITRTELLHKISMIYPMLKAELFLHYSKEQLPETLDTLIDELARQQLICDKGSELVLNPARIRPLQLLAAGVRETLQRYAITLSLLSATPSINRGALEKESRIMAQRLSVLHGINAPEFFDKAVFSTLVATLREEGYISDSGDAIQEHTLEVYNMLSALMTPEVKLTIESVSMPAETSNQPEAPETPETPETPETPEPEGKTES.

The short motif at 304 to 309 (CHRSHM) is the HXXXXD motif element. Residues 800 to 834 (SVSMPAETSNQPEAPETPETPETPETPEPEGKTES) are disordered.

The protein belongs to the GPAT/DAPAT family.

It localises to the cell inner membrane. It catalyses the reaction sn-glycerol 3-phosphate + an acyl-CoA = a 1-acyl-sn-glycero-3-phosphate + CoA. Its pathway is phospholipid metabolism; CDP-diacylglycerol biosynthesis; CDP-diacylglycerol from sn-glycerol 3-phosphate: step 1/3. In Yersinia pseudotuberculosis serotype I (strain IP32953), this protein is Glycerol-3-phosphate acyltransferase.